The primary structure comprises 96 residues: Cysteine proteinase (96 aa).

A disulfide bond links C25 and C79. Active-site residues include H31 and N58.

This sequence belongs to the peptidase C1 family.

This is Cysteine proteinase from Carica papaya (Papaya).